Here is a 109-residue protein sequence, read N- to C-terminus: Thiosulfate sulfurtransferase GlpE (109 aa).

The Rhodanese domain occupies 16-104 (RSNGAVVVDI…WRATFPSETA (89 aa)). The active-site Cysteine persulfide intermediate is the cysteine 64.

This sequence belongs to the GlpE family.

The protein localises to the cytoplasm. The enzyme catalyses thiosulfate + hydrogen cyanide = thiocyanate + sulfite + 2 H(+). It catalyses the reaction thiosulfate + [thioredoxin]-dithiol = [thioredoxin]-disulfide + hydrogen sulfide + sulfite + 2 H(+). Functionally, transferase that catalyzes the transfer of sulfur from thiosulfate to thiophilic acceptors such as cyanide or dithiols. May function in a CysM-independent thiosulfate assimilation pathway by catalyzing the conversion of thiosulfate to sulfite, which can then be used for L-cysteine biosynthesis. The polypeptide is Thiosulfate sulfurtransferase GlpE (Ectopseudomonas mendocina (strain ymp) (Pseudomonas mendocina)).